Consider the following 286-residue polypeptide: ATP synthase gamma chain (286 aa).

Belongs to the ATPase gamma chain family. In terms of assembly, F-type ATPases have 2 components, CF(1) - the catalytic core - and CF(0) - the membrane proton channel. CF(1) has five subunits: alpha(3), beta(3), gamma(1), delta(1), epsilon(1). CF(0) has three main subunits: a, b and c.

The protein resides in the cell inner membrane. Its function is as follows. Produces ATP from ADP in the presence of a proton gradient across the membrane. The gamma chain is believed to be important in regulating ATPase activity and the flow of protons through the CF(0) complex. This Shewanella amazonensis (strain ATCC BAA-1098 / SB2B) protein is ATP synthase gamma chain.